A 237-amino-acid chain; its full sequence is Sugar fermentation stimulation protein homolog (237 aa).

The protein belongs to the SfsA family.

The chain is Sugar fermentation stimulation protein homolog from Pseudomonas putida (strain ATCC 700007 / DSM 6899 / JCM 31910 / BCRC 17059 / LMG 24140 / F1).